A 174-amino-acid polypeptide reads, in one-letter code: Guided entry of tail-anchored proteins factor 1 (174 aa).

The Lumenal segment spans residues M1–R8. Residues W9–P29 traverse the membrane as a helical segment. At S30–K99 the chain is on the cytoplasmic side. Positions L39–T94 form a coiled coil. Residues L39 to L97 form an interaction with GET3/TRC40 region. The helical transmembrane segment at I100–I120 threads the bilayer. The Lumenal segment spans residues W121–R148. A helical membrane pass occupies residues V149–V169. Residues L170 to S174 are Cytoplasmic-facing.

This sequence belongs to the WRB/GET1 family. In terms of assembly, component of the Golgi to ER traffic (GET) complex, which is composed of GET1/WRB, CAMLG/GET2 and GET3. Within the complex, GET1 and CAMLG form a heterotetramer which is stabilized by phosphatidylinositol binding and which binds to the GET3 homodimer. Interacts with CAMLG (via C-terminus). GET3 shows a higher affinity for CAMLG than for GET1.

Its subcellular location is the endoplasmic reticulum membrane. Functionally, required for the post-translational delivery of tail-anchored (TA) proteins to the endoplasmic reticulum. Together with CAMLG/GET2, acts as a membrane receptor for soluble GET3/TRC40, which recognizes and selectively binds the transmembrane domain of TA proteins in the cytosol. Required to ensure correct topology and ER insertion of CAMLG. This Bos taurus (Bovine) protein is Guided entry of tail-anchored proteins factor 1.